The following is a 179-amino-acid chain: MTETYIKNTSKDLTSAIRGQLTYDDKVIEKIVGLALENVDGLLGVNGGFFANLKDKLVNTESVRDGVNVEVGKKQVAVDLDIVAEYQKHVPTIYDSIKSIVEEEVKRMTDLDVIEVNVKVVDIKTKEQFEAEKVSLQDKVSDMARSTSEFTSHQVENVKASVDNGVEKLQDQKAEPRVK.

Residues 147–179 (TSEFTSHQVENVKASVDNGVEKLQDQKAEPRVK) are disordered. Over residues 165-179 (GVEKLQDQKAEPRVK) the composition is skewed to basic and acidic residues.

The protein belongs to the asp23 family.

In Streptococcus pyogenes serotype M28 (strain MGAS6180), this protein is Stress response regulator gls24 homolog.